Reading from the N-terminus, the 901-residue chain is Protein translocase subunit SecA 1 (901 aa).

ATP is bound by residues glutamine 89, 107–111 (GEGKT), and aspartate 502. The segment at 856-875 (AEAKASGDARPGFVEDDPST) is disordered. 4 residues coordinate Zn(2+): cysteine 885, cysteine 887, cysteine 896, and histidine 897.

It belongs to the SecA family. In terms of assembly, monomer and homodimer. Part of the essential Sec protein translocation apparatus which comprises SecA, SecYEG and auxiliary proteins SecDF-YajC and YidC. Requires Zn(2+) as cofactor.

Its subcellular location is the cell inner membrane. It is found in the cytoplasm. The catalysed reaction is ATP + H2O + cellular proteinSide 1 = ADP + phosphate + cellular proteinSide 2.. Its function is as follows. Part of the Sec protein translocase complex. Interacts with the SecYEG preprotein conducting channel. Has a central role in coupling the hydrolysis of ATP to the transfer of proteins into and across the cell membrane, serving both as a receptor for the preprotein-SecB complex and as an ATP-driven molecular motor driving the stepwise translocation of polypeptide chains across the membrane. The chain is Protein translocase subunit SecA 1 from Ruegeria pomeroyi (strain ATCC 700808 / DSM 15171 / DSS-3) (Silicibacter pomeroyi).